The sequence spans 164 residues: Kunitz-type serine protease inhibitor BbKI (164 aa).

This sequence belongs to the protease inhibitor I3 (leguminous Kunitz-type inhibitor) family. As to quaternary structure, monomer.

The protein resides in the secreted. Inhibits bovine trypsin, human plasma kallikrein and plasmin and weakly bovine chymotrypsin. The polypeptide is Kunitz-type serine protease inhibitor BbKI (Bauhinia bauhinioides (Perlebia bauhinoides)).